A 485-amino-acid polypeptide reads, in one-letter code: NADH-quinone oxidoreductase subunit N (485 aa).

Helical transmembrane passes span 3–23, 30–50, 67–87, 96–116, 120–140, 154–174, 202–222, 247–267, 271–291, 299–319, 332–352, 375–395, 411–431, and 453–473; these read LFMP…TDLF, HLAY…VLNW, YASF…MASV, FQGE…MMAS, LITM…LVGF, LLLG…IYGF, FILG…AVPF, AAGF…PLAL, WALI…VLAI, MLGY…AAVG, LFYL…IIAI, ASAL…AGFL, WLMI…FNVI, and LALG…ETLL.

It belongs to the complex I subunit 2 family. As to quaternary structure, NDH-1 is composed of 14 different subunits. Subunits NuoA, H, J, K, L, M, N constitute the membrane sector of the complex.

The protein localises to the cell membrane. The catalysed reaction is a quinone + NADH + 5 H(+)(in) = a quinol + NAD(+) + 4 H(+)(out). NDH-1 shuttles electrons from NADH, via FMN and iron-sulfur (Fe-S) centers, to quinones in the respiratory chain. The immediate electron acceptor for the enzyme in this species is believed to be ubiquinone. Couples the redox reaction to proton translocation (for every two electrons transferred, four hydrogen ions are translocated across the cytoplasmic membrane), and thus conserves the redox energy in a proton gradient. The protein is NADH-quinone oxidoreductase subunit N of Dehalococcoides mccartyi (strain ATCC BAA-2100 / JCM 16839 / KCTC 5957 / BAV1).